Consider the following 734-residue polypeptide: Photosystem I P700 chlorophyll a apoprotein A2 (734 aa).

The next 8 membrane-spanning stretches (helical) occupy residues I46 to A69, L135 to Q158, L175 to I199, I273 to Y291, I330 to Y353, A369 to I395, A417 to H439, and F517 to V535. [4Fe-4S] cluster is bound by residues C559 and C568. The next 2 helical transmembrane spans lie at A575–W596 and L643–I665. Chlorophyll a-binding residues include H654, M662, and Y670. W671 provides a ligand contact to phylloquinone. The helical transmembrane segment at L707–A727 threads the bilayer.

The protein belongs to the PsaA/PsaB family. As to quaternary structure, the PsaA/B heterodimer binds the P700 chlorophyll special pair and subsequent electron acceptors. PSI consists of a core antenna complex that captures photons, and an electron transfer chain that converts photonic excitation into a charge separation. The eukaryotic PSI reaction center is composed of at least 11 subunits. P700 is a chlorophyll a/chlorophyll a' dimer, A0 is one or more chlorophyll a, A1 is one or both phylloquinones and FX is a shared 4Fe-4S iron-sulfur center. serves as cofactor.

It localises to the plastid. It is found in the chloroplast thylakoid membrane. The enzyme catalyses reduced [plastocyanin] + hnu + oxidized [2Fe-2S]-[ferredoxin] = oxidized [plastocyanin] + reduced [2Fe-2S]-[ferredoxin]. Functionally, psaA and PsaB bind P700, the primary electron donor of photosystem I (PSI), as well as the electron acceptors A0, A1 and FX. PSI is a plastocyanin-ferredoxin oxidoreductase, converting photonic excitation into a charge separation, which transfers an electron from the donor P700 chlorophyll pair to the spectroscopically characterized acceptors A0, A1, FX, FA and FB in turn. Oxidized P700 is reduced on the lumenal side of the thylakoid membrane by plastocyanin. The chain is Photosystem I P700 chlorophyll a apoprotein A2 from Illicium oligandrum (Star anise).